The following is a 1037-amino-acid chain: Nucleoporin NUP120 (1037 aa).

2 leucine-zipper regions span residues 131–152 (LQLP…WFHL) and 290–311 (LLPL…SGIL). Thr417 bears the Phosphothreonine mark.

Component of the nuclear pore complex (NPC). NPC constitutes the exclusive means of nucleocytoplasmic transport. NPCs allow the passive diffusion of ions and small molecules and the active, nuclear transport receptor-mediated bidirectional transport of macromolecules such as proteins, RNAs, ribonucleoparticles (RNPs), and ribosomal subunits across the nuclear envelope. Due to its 8-fold rotational symmetry, all subunits are present with 8 copies or multiples thereof. NUP120 is part of the heptameric 0.5 MDa autoassembling NUP84 NPC subcomplex (NUP84, NUP85, NUP120, NUP133, NUP145C, SEC13 and SEH1).

Its subcellular location is the nucleus. The protein localises to the nuclear pore complex. It is found in the nucleus membrane. Functionally, functions as a component of the nuclear pore complex (NPC). NPC components, collectively referred to as nucleoporins (NUPs), can play the role of both NPC structural components and of docking or interaction partners for transiently associated nuclear transport factors. NUP120 is involved in nuclear poly(A)+ RNA and pre-ribosome export, in GSP1 nuclear import, in NPC assembly and distribution, as well as in nuclear envelope organization. The protein is Nucleoporin NUP120 (NUP120) of Saccharomyces cerevisiae (strain ATCC 204508 / S288c) (Baker's yeast).